We begin with the raw amino-acid sequence, 206 residues long: LexA repressor (206 aa).

A DNA-binding region (H-T-H motif) is located at residues 29-49 (VREICEAVGLRSTSTVHGHLA). Active-site for autocatalytic cleavage activity residues include Ser-130 and Lys-167.

Belongs to the peptidase S24 family. Homodimer.

It carries out the reaction Hydrolysis of Ala-|-Gly bond in repressor LexA.. Functionally, represses a number of genes involved in the response to DNA damage (SOS response), including recA and lexA. In the presence of single-stranded DNA, RecA interacts with LexA causing an autocatalytic cleavage which disrupts the DNA-binding part of LexA, leading to derepression of the SOS regulon and eventually DNA repair. This is LexA repressor from Alkaliphilus oremlandii (strain OhILAs) (Clostridium oremlandii (strain OhILAs)).